Reading from the N-terminus, the 143-residue chain is Small ribosomal subunit protein uS12 (143 aa).

Basic residues predominate over residues 1–20; it reads MGKCRGLRTARKLRSHRRDQ. Residues 1–26 are disordered; sequence MGKCRGLRTARKLRSHRRDQKWHDKQ. K37 participates in a covalent cross-link: Glycyl lysine isopeptide (Lys-Gly) (interchain with G-Cter in SUMO2). K54 is modified (N6-succinyllysine). Position 62 is a 3-hydroxyproline (P62). The residue at position 135 (K135) is an N6-acetyllysine.

Belongs to the universal ribosomal protein uS12 family. In terms of assembly, component of the 40S small ribosomal subunit. Part of the small subunit (SSU) processome, composed of more than 70 proteins and the RNA chaperone small nucleolar RNA (snoRNA) U3. In terms of processing, hydroxylation at Pro-62 affects translation termination efficiency.

It localises to the cytoplasm. The protein localises to the cytosol. The protein resides in the rough endoplasmic reticulum. It is found in the nucleus. Its subcellular location is the nucleolus. Functionally, component of the ribosome, a large ribonucleoprotein complex responsible for the synthesis of proteins in the cell. The small ribosomal subunit (SSU) binds messenger RNAs (mRNAs) and translates the encoded message by selecting cognate aminoacyl-transfer RNA (tRNA) molecules. The large subunit (LSU) contains the ribosomal catalytic site termed the peptidyl transferase center (PTC), which catalyzes the formation of peptide bonds, thereby polymerizing the amino acids delivered by tRNAs into a polypeptide chain. The nascent polypeptides leave the ribosome through a tunnel in the LSU and interact with protein factors that function in enzymatic processing, targeting, and the membrane insertion of nascent chains at the exit of the ribosomal tunnel. Plays an important role in translational accuracy. Part of the small subunit (SSU) processome, first precursor of the small eukaryotic ribosomal subunit. During the assembly of the SSU processome in the nucleolus, many ribosome biogenesis factors, an RNA chaperone and ribosomal proteins associate with the nascent pre-rRNA and work in concert to generate RNA folding, modifications, rearrangements and cleavage as well as targeted degradation of pre-ribosomal RNA by the RNA exosome. This is Small ribosomal subunit protein uS12 (RPS23) from Bos taurus (Bovine).